Consider the following 400-residue polypeptide: Elongation factor Tu 2 (400 aa).

The 200-residue stretch at 10–209 (KPHVNIGTIG…AVDEYIPTPQ (200 aa)) folds into the tr-type G domain. Residues 19–26 (GHVDHGKT) are G1. A GTP-binding site is contributed by 19–26 (GHVDHGKT). Thr26 contacts Mg(2+). Residues 60 to 64 (GITIN) are G2. Positions 81–84 (DCPG) are G3. Residues 81–85 (DCPGH) and 136–139 (NKAD) each bind GTP. A G4 region spans residues 136–139 (NKAD). Residues 174-176 (SAL) are G5.

Belongs to the TRAFAC class translation factor GTPase superfamily. Classic translation factor GTPase family. EF-Tu/EF-1A subfamily. In terms of assembly, monomer.

The protein resides in the cytoplasm. The catalysed reaction is GTP + H2O = GDP + phosphate + H(+). In terms of biological role, GTP hydrolase that promotes the GTP-dependent binding of aminoacyl-tRNA to the A-site of ribosomes during protein biosynthesis. The chain is Elongation factor Tu 2 from Pelotomaculum thermopropionicum (strain DSM 13744 / JCM 10971 / SI).